The chain runs to 385 residues: 8-amino-7-oxononanoate synthase (385 aa).

Residue Arg21 participates in substrate binding. 108-109 contributes to the pyridoxal 5'-phosphate binding site; sequence GF. Position 133 (His133) interacts with substrate. Pyridoxal 5'-phosphate is bound by residues Ser179, His207, and Thr233. N6-(pyridoxal phosphate)lysine is present on Lys236. Position 352 (Thr352) interacts with substrate.

This sequence belongs to the class-II pyridoxal-phosphate-dependent aminotransferase family. BioF subfamily. In terms of assembly, homodimer. The cofactor is pyridoxal 5'-phosphate.

The catalysed reaction is 6-carboxyhexanoyl-[ACP] + L-alanine + H(+) = (8S)-8-amino-7-oxononanoate + holo-[ACP] + CO2. Its pathway is cofactor biosynthesis; biotin biosynthesis. Functionally, catalyzes the decarboxylative condensation of pimeloyl-[acyl-carrier protein] and L-alanine to produce 8-amino-7-oxononanoate (AON), [acyl-carrier protein], and carbon dioxide. In Salmonella choleraesuis (strain SC-B67), this protein is 8-amino-7-oxononanoate synthase.